Here is a 164-residue protein sequence, read N- to C-terminus: Replication restart protein DnaT (164 aa).

This sequence belongs to the DnaT family. Homooligomerizes. Interacts with PriB. Component of the replication restart primosome. Primosome assembly occurs via a 'hand-off' mechanism. PriA binds to replication forks, subsequently PriB then DnaT bind; DnaT then displaces ssDNA to generate the helicase loading substrate.

In terms of biological role, involved in the restart of stalled replication forks, which reloads the replicative helicase on sites other than the origin of replication. Can function in multiple replication restart pathways. Displaces ssDNA from a PriB-ssDNA complex. Probably forms a spiral filament on ssDNA. This chain is Replication restart protein DnaT, found in Buchnera aphidicola subsp. Acyrthosiphon pisum (strain 5A).